Here is a 189-residue protein sequence, read N- to C-terminus: dCTP deaminase (189 aa).

DCTP contacts are provided by residues 112-117 (KSTYAR), 136-138 (TLE), Gln-157, Tyr-171, and Gln-181. Residue Glu-138 is the Proton donor/acceptor of the active site.

The protein belongs to the dCTP deaminase family. In terms of assembly, homotrimer.

It catalyses the reaction dCTP + H2O + H(+) = dUTP + NH4(+). The protein operates within pyrimidine metabolism; dUMP biosynthesis; dUMP from dCTP (dUTP route): step 1/2. Catalyzes the deamination of dCTP to dUTP. This Paraburkholderia phymatum (strain DSM 17167 / CIP 108236 / LMG 21445 / STM815) (Burkholderia phymatum) protein is dCTP deaminase.